The chain runs to 500 residues: ADP,ATP carrier protein 5 (500 aa).

11 helical membrane passes run 26–46 (LGKFIPISALMFCILFNQNIL), 62–82 (IAGFAKVYCVTPVAALFVIIY), 94–114 (IFYYLSAFFISCFILFAFVIY), 149–169 (YIVYYSLAELWPNIFYVLLFW), 184–204 (FYTLFSLFGNSSLILVGFLMM), 224–244 (ITLVQVSTTIVAIVAIICCLL), 287–307 (LWLLLICSAAFGFAINLVEAV), 328–348 (LYILWTGVAIIVMTIIGNNVM), 357–377 (AVISPVIIMVTGILFFVLIVF), 381–401 (ILSLFDGAILMSPLALAVSIG), and 469–489 (SISPILMVVFTFVCFAWIYAV).

Belongs to the ADP/ATP translocase tlc family.

It localises to the cell membrane. In terms of biological role, provides the rickettsial cell with host ATP in exchange for rickettsial ADP. This is an obligate exchange system. This energy acquiring activity is an important component of rickettsial parasitism. The sequence is that of ADP,ATP carrier protein 5 (tlcE) from Rickettsia typhi (strain ATCC VR-144 / Wilmington).